A 356-amino-acid polypeptide reads, in one-letter code: Histidinol-phosphate aminotransferase (356 aa).

Residue Lys211 is modified to N6-(pyridoxal phosphate)lysine.

This sequence belongs to the class-II pyridoxal-phosphate-dependent aminotransferase family. Histidinol-phosphate aminotransferase subfamily. In terms of assembly, homodimer. Pyridoxal 5'-phosphate is required as a cofactor.

It carries out the reaction L-histidinol phosphate + 2-oxoglutarate = 3-(imidazol-4-yl)-2-oxopropyl phosphate + L-glutamate. It participates in amino-acid biosynthesis; L-histidine biosynthesis; L-histidine from 5-phospho-alpha-D-ribose 1-diphosphate: step 7/9. The chain is Histidinol-phosphate aminotransferase from Aeromonas hydrophila subsp. hydrophila (strain ATCC 7966 / DSM 30187 / BCRC 13018 / CCUG 14551 / JCM 1027 / KCTC 2358 / NCIMB 9240 / NCTC 8049).